The primary structure comprises 601 residues: Elongation factor 4 (601 aa).

One can recognise a tr-type G domain in the interval 7-189; it reads SNVRNFSIVA…AIVTRLPPPK (183 aa). GTP-binding positions include 19-24 and 136-139; these read DHGKST and NKVD.

The protein belongs to the TRAFAC class translation factor GTPase superfamily. Classic translation factor GTPase family. LepA subfamily.

Its subcellular location is the cell inner membrane. It catalyses the reaction GTP + H2O = GDP + phosphate + H(+). Required for accurate and efficient protein synthesis under certain stress conditions. May act as a fidelity factor of the translation reaction, by catalyzing a one-codon backward translocation of tRNAs on improperly translocated ribosomes. Back-translocation proceeds from a post-translocation (POST) complex to a pre-translocation (PRE) complex, thus giving elongation factor G a second chance to translocate the tRNAs correctly. Binds to ribosomes in a GTP-dependent manner. This Afipia carboxidovorans (strain ATCC 49405 / DSM 1227 / KCTC 32145 / OM5) (Oligotropha carboxidovorans) protein is Elongation factor 4.